The sequence spans 447 residues: Exodeoxyribonuclease 7 large subunit (447 aa).

The protein belongs to the XseA family. As to quaternary structure, heterooligomer composed of large and small subunits.

The protein resides in the cytoplasm. The catalysed reaction is Exonucleolytic cleavage in either 5'- to 3'- or 3'- to 5'-direction to yield nucleoside 5'-phosphates.. Bidirectionally degrades single-stranded DNA into large acid-insoluble oligonucleotides, which are then degraded further into small acid-soluble oligonucleotides. This is Exodeoxyribonuclease 7 large subunit from Exiguobacterium sibiricum (strain DSM 17290 / CCUG 55495 / CIP 109462 / JCM 13490 / 255-15).